A 385-amino-acid chain; its full sequence is Succinate--CoA ligase [ADP-forming] subunit beta (385 aa).

Residues 9 to 244 form the ATP-grasp domain; the sequence is KEVLRKYGVS…LDEEDPKEIE (236 aa). ATP-binding positions include K46, 53–55, E99, C102, and E107; that span reads GRG. Mg(2+) is bound by residues N199 and D213. Substrate contacts are provided by residues N264 and 321–323; that span reads GIM.

The protein belongs to the succinate/malate CoA ligase beta subunit family. Heterotetramer of two alpha and two beta subunits. It depends on Mg(2+) as a cofactor.

The catalysed reaction is succinate + ATP + CoA = succinyl-CoA + ADP + phosphate. It catalyses the reaction GTP + succinate + CoA = succinyl-CoA + GDP + phosphate. It participates in carbohydrate metabolism; tricarboxylic acid cycle; succinate from succinyl-CoA (ligase route): step 1/1. In terms of biological role, succinyl-CoA synthetase functions in the citric acid cycle (TCA), coupling the hydrolysis of succinyl-CoA to the synthesis of either ATP or GTP and thus represents the only step of substrate-level phosphorylation in the TCA. The beta subunit provides nucleotide specificity of the enzyme and binds the substrate succinate, while the binding sites for coenzyme A and phosphate are found in the alpha subunit. This chain is Succinate--CoA ligase [ADP-forming] subunit beta, found in Bacillus velezensis (strain DSM 23117 / BGSC 10A6 / LMG 26770 / FZB42) (Bacillus amyloliquefaciens subsp. plantarum).